Reading from the N-terminus, the 523-residue chain is Putative L-type lectin-domain containing receptor kinase V.6 (523 aa).

The N-terminal stretch at Met-1–Gly-27 is a signal peptide. Residues Thr-28–Met-242 form a legume-lectin like region. Residues Thr-28–Leu-279 lie on the Extracellular side of the membrane. Asn-47, Asn-59, Asn-112, and Asn-171 each carry an N-linked (GlcNAc...) asparagine glycan. Residues Ala-280–Phe-300 form a helical membrane-spanning segment. Over Tyr-301–Phe-523 the chain is Cytoplasmic. The Protein kinase domain occupies Phe-335–Phe-523. Residues Leu-341 to Val-349 and Lys-364 each bind ATP. The active-site Proton acceptor is the Asp-464.

The protein in the C-terminal section; belongs to the protein kinase superfamily. Ser/Thr protein kinase family. In the N-terminal section; belongs to the leguminous lectin family.

The protein resides in the cell membrane. It catalyses the reaction L-seryl-[protein] + ATP = O-phospho-L-seryl-[protein] + ADP + H(+). The enzyme catalyses L-threonyl-[protein] + ATP = O-phospho-L-threonyl-[protein] + ADP + H(+). The sequence is that of Putative L-type lectin-domain containing receptor kinase V.6 (LECRK56) from Arabidopsis thaliana (Mouse-ear cress).